Here is a 360-residue protein sequence, read N- to C-terminus: Inward rectifier potassium channel 13 (360 aa).

Over 1-50 (MDSSNCKVNAPLLSQRHRRMVTKDGHSTLQMDGAQRGLVYLRDAWGILMD) the chain is Cytoplasmic. A helical transmembrane segment spans residues 51–77 (MRWRWMMLVFSASFVVHWLVFAVLWYA). The Extracellular portion of the chain corresponds to 78-105 (VAEMNGDLEIDHDVPPENHTICVKHITS). The segment at residues 106-122 (FTAAFSFSLETQLTIGY) is an intramembrane region (helical; Pore-forming). Residues 119–124 (TIGYGT) carry the Selectivity filter motif. Residues 123–131 (GTMFPSGDC) are Extracellular-facing. The chain crosses the membrane as a helical span at residues 132–157 (PSAIALLAIQMLLGLMLEAFITGAFV). Residues 158–360 (AKIARPKNRA…FQIAETGLTE (203 aa)) are Cytoplasmic-facing. At Ser-287 the chain carries Phosphoserine; by PKA.

The protein belongs to the inward rectifier-type potassium channel (TC 1.A.2.1) family. KCNJ13 subfamily. Homotetramer. Interacts with RAB28; the interaction may facilitate cone outer segments phagocytosis. Post-translationally, phosphorylation at Ser-287 by PKA increases ionic currents. As to expression, expressed in retina.

The protein resides in the membrane. The protein localises to the cell membrane. The enzyme catalyses K(+)(in) = K(+)(out). Its activity is regulated as follows. Inhibited by Ba(2+) and Cs(+), although sensitivity to those inhibitors is much lower than in other Kir channels. In terms of biological role, inward rectifier potassium channels are characterized by a greater tendency to allow potassium to flow into the cell rather than out of it. Their voltage dependence is regulated by the concentration of extracellular potassium; as external potassium is raised, the voltage range of the channel opening shifts to more positive voltages. The inward rectification is mainly due to the blockage of outward current by internal magnesium. KCNJ13 has a very low single channel conductance, low sensitivity to block by external barium and cesium, and no dependence of its inward rectification properties on the internal blocking particle magnesium. In Mus musculus (Mouse), this protein is Inward rectifier potassium channel 13.